Reading from the N-terminus, the 371-residue chain is MSQLPLTSDLARIFLDDVPLIDLRAPIEFKEGAFPCSTSLPLMTDDERAQVGTCFKQRGQAAAIELGHQLVGGAVRAERLDGWLAQLRKQPDALLYCFRGGLRSQTVQLWLHEAGVTRPRVAGGYKEMRRFLIDTLDKAAAECHWTVLTGMTGSGKTHMLEHVTQAVDLEGHAHHRGSSFGQLPGGQPSNINFENKLAIELLKRRHQGEHAFVVEDESRLIGRCCLPNPLFDAMCEAPLVVVDVPQSERAEQIRQDYVHDLWLRYQAMFGAEEGWPLFAAYLTDALARLKRRLGDQAHRELDQLMQIALAEQANSGTTERHLAWITLLLTRYYDPMYLYQLGNKRERIVFRGEKQACLDFFAEQHAARQQG.

Residues 14 to 137 enclose the Rhodanese domain; the sequence is FLDDVPLIDL…MRRFLIDTLD (124 aa). C97 acts as the S-selanylcysteine intermediate in catalysis.

Belongs to the SelU family. Monomer.

The catalysed reaction is 5-methylaminomethyl-2-thiouridine(34) in tRNA + selenophosphate + (2E)-geranyl diphosphate + H2O + H(+) = 5-methylaminomethyl-2-selenouridine(34) in tRNA + (2E)-thiogeraniol + phosphate + diphosphate. It carries out the reaction 5-methylaminomethyl-2-thiouridine(34) in tRNA + (2E)-geranyl diphosphate = 5-methylaminomethyl-S-(2E)-geranyl-thiouridine(34) in tRNA + diphosphate. It catalyses the reaction 5-methylaminomethyl-S-(2E)-geranyl-thiouridine(34) in tRNA + selenophosphate + H(+) = 5-methylaminomethyl-2-(Se-phospho)selenouridine(34) in tRNA + (2E)-thiogeraniol. The enzyme catalyses 5-methylaminomethyl-2-(Se-phospho)selenouridine(34) in tRNA + H2O = 5-methylaminomethyl-2-selenouridine(34) in tRNA + phosphate. In terms of biological role, involved in the post-transcriptional modification of the uridine at the wobble position (U34) of tRNA(Lys), tRNA(Glu) and tRNA(Gln). Catalyzes the conversion of 2-thiouridine (S2U-RNA) to 2-selenouridine (Se2U-RNA). Acts in a two-step process involving geranylation of 2-thiouridine (S2U) to S-geranyl-2-thiouridine (geS2U) and subsequent selenation of the latter derivative to 2-selenouridine (Se2U) in the tRNA chain. This chain is tRNA 2-selenouridine synthase, found in Aeromonas salmonicida (strain A449).